The sequence spans 189 residues: RxLR effector protein CRE18 (189 aa).

The signal sequence occupies residues 1–23 (MSKLFYAFAVLAVHVLTSSPTTA). The short motif at 47–68 (RFLRSIHEGEDSLKPSAFSEER) is the RxLR-dEER element.

Belongs to the RxLR effector family.

Its subcellular location is the secreted. The protein localises to the host cytoplasm. The protein resides in the host nucleus. Effector that is involved in host plant infection. Contributes to virulence during the early infection stage, by inhibiting plant defense responses induced by both PAMP-triggered immunity (PTI) and effector-triggered immunity (ETI). This Phytophthora infestans (strain T30-4) (Potato late blight agent) protein is RxLR effector protein CRE18.